A 171-amino-acid polypeptide reads, in one-letter code: uncharacterized protein (171 aa).

A helical transmembrane segment spans residues 21 to 43 (GVAASLLILLAVYTIFQSTVVIA).

The protein resides in the membrane. This is an uncharacterized protein from Archaeoglobus fulgidus (strain ATCC 49558 / DSM 4304 / JCM 9628 / NBRC 100126 / VC-16).